The primary structure comprises 208 residues: 3-demethoxyubiquinol 3-hydroxylase (208 aa).

6 residues coordinate Fe cation: Glu57, Glu87, His90, Glu139, Glu171, and His174.

It belongs to the COQ7 family. It depends on Fe cation as a cofactor.

Its subcellular location is the cell membrane. It carries out the reaction a 5-methoxy-2-methyl-3-(all-trans-polyprenyl)benzene-1,4-diol + AH2 + O2 = a 3-demethylubiquinol + A + H2O. It participates in cofactor biosynthesis; ubiquinone biosynthesis. In terms of biological role, catalyzes the hydroxylation of 2-nonaprenyl-3-methyl-6-methoxy-1,4-benzoquinol during ubiquinone biosynthesis. This chain is 3-demethoxyubiquinol 3-hydroxylase, found in Burkholderia thailandensis (strain ATCC 700388 / DSM 13276 / CCUG 48851 / CIP 106301 / E264).